Consider the following 158-residue polypeptide: Cyclic pyranopterin monophosphate synthase (158 aa).

Substrate is bound by residues 76-78 and 114-115; these read LCH and ME. D129 is an active-site residue.

The protein belongs to the MoaC family. Homohexamer; trimer of dimers.

The enzyme catalyses (8S)-3',8-cyclo-7,8-dihydroguanosine 5'-triphosphate = cyclic pyranopterin phosphate + diphosphate. The protein operates within cofactor biosynthesis; molybdopterin biosynthesis. In terms of biological role, catalyzes the conversion of (8S)-3',8-cyclo-7,8-dihydroguanosine 5'-triphosphate to cyclic pyranopterin monophosphate (cPMP). In Shewanella woodyi (strain ATCC 51908 / MS32), this protein is Cyclic pyranopterin monophosphate synthase.